Consider the following 478-residue polypeptide: Sugar transporter ERD6-like 15 (478 aa).

12 helical membrane-spanning segments follow: residues 31 to 51 (FVLAFIVGSCGAFAFGCIIGY), 67 to 87 (IADYSLFGSILTVGLILGALI), 106 to 126 (ILFVIGWFAIAFAKGVWLLDL), 129 to 149 (LLQGISIGISVYLGPVYITEI), 161 to 181 (FAQLFAGVGISVFYALGTIVA), 185 to 205 (LAILGCIPSLMVLPLLFFIPE), 267 to 287 (AFSLTIGVVLIALPQLGGLNG), 305 to 325 (FGFISTSVVQMFGGILGTVLV), 333 to 353 (LLLVSQAGMFLGCLTTAISFF), 366 to 386 (VLALFSVMVYFGSYGSGMGSI), 406 to 426 (MCNLVSSISAWLVAYSFSYLL), and 432 to 452 (GTFLMFATVAGLGFVFIAKLV).

The protein belongs to the major facilitator superfamily. Sugar transporter (TC 2.A.1.1) family.

The protein localises to the membrane. In terms of biological role, sugar transporter. This chain is Sugar transporter ERD6-like 15, found in Arabidopsis thaliana (Mouse-ear cress).